Here is a 397-residue protein sequence, read N- to C-terminus: Putative nickel insertion protein (397 aa).

The protein belongs to the LarC family.

This is Putative nickel insertion protein from Synechococcus sp. (strain JA-3-3Ab) (Cyanobacteria bacterium Yellowstone A-Prime).